The primary structure comprises 839 residues: Elongation factor 2 (839 aa).

The 232-residue stretch at 17–248 folds into the tr-type G domain; the sequence is ENIRNMSVIA…MGRLWGDSYF (232 aa). Residues 26–33, 156–159, and 211–213 contribute to the GTP site; these read AHVDHGKT, NKVD, and SGL. Histidine 698 carries the post-translational modification Diphthamide.

Belongs to the TRAFAC class translation factor GTPase superfamily. Classic translation factor GTPase family. EF-G/EF-2 subfamily. In terms of processing, phosphorylation by EF-2 kinase completely inactivates EF-2.

The protein resides in the cytoplasm. The catalysed reaction is GTP + H2O = GDP + phosphate + H(+). Functionally, catalyzes the GTP-dependent ribosomal translocation step during translation elongation. During this step, the ribosome changes from the pre-translocational (PRE) to the post-translocational (POST) state as the newly formed A-site-bound peptidyl-tRNA and P-site-bound deacylated tRNA move to the P and E sites, respectively. Catalyzes the coordinated movement of the two tRNA molecules, the mRNA and conformational changes in the ribosome. In Dictyostelium discoideum (Social amoeba), this protein is Elongation factor 2 (efbA).